A 429-amino-acid chain; its full sequence is Violacein synthase (429 aa).

3-21 (RAIIVGGGLAGGLTAIYLA) is an FAD binding site.

FAD is required as a cofactor.

It catalyses the reaction protoviolaceinate + NADPH + O2 + H(+) = violaceinate + NADP(+) + H2O. The catalysed reaction is protoviolaceinate + NADH + O2 + H(+) = violaceinate + NAD(+) + H2O. It carries out the reaction protodeoxyviolaceinate + NADPH + O2 + H(+) = deoxyviolaceinate + NADP(+) + H2O. The enzyme catalyses protodeoxyviolaceinate + NADH + O2 + H(+) = deoxyviolaceinate + NAD(+) + H2O. It functions in the pathway pigment biosynthesis; violacein biosynthesis. Catalyzes the hydroxylation of the 16-position of protoviolaceinate and protodeoxyviolaceinate to form violacein and deoxyviolacein, respectively. The protein is Violacein synthase (vioC) of Chromobacterium violaceum (strain ATCC 12472 / DSM 30191 / JCM 1249 / CCUG 213 / NBRC 12614 / NCIMB 9131 / NCTC 9757 / MK).